The following is a 179-amino-acid chain: uncharacterized protein (179 aa).

Residues 1-26 (MKKNMILFFGILKKLLICILKMEIKC) form the signal peptide.

This is an uncharacterized protein from Acheta domesticus (House cricket).